We begin with the raw amino-acid sequence, 537 residues long: MSRRVEFDMSHEDHTDRRRTNTFSSEEDGVPNEVADYLVYFSRMIDEQNVPEILTLYDQAFPDLTERFFRDRMWPDENVVERIIGPGNKLFIILYKELYYRQLYARNARGPLLVHRYESFMNYQELFSELLSSKDPIPLSLPNVWLWDIIDEFVYQFQAFCLYKANPGKRNADEVEDLINIEENQNAWNIYPVLNILYSLLSKSQIVEQLKALKEKRNPDSVADEFGQSDLYFKLGYFALIGLLRTHVLLGDYHQALKTVQYVDIDPKGIYNTVPTCLVTLHYFVGFSHLMMRNYGEATKMFVNCLLYIQRTKTVQSQQPSKKNFQYDVIGKTWDQLFYLLAICLAVQPQRIDESIASQLAERCGERMMHMANGNVDEFRNAFSTGCPKFLSPTTVVYEGVNQSKEPLLRQTQSFLEGIESQMALPVLRGYLKLYTTLPTKKLASFMDVDEENYDSFLGKLLTYKMIVNELGKEAGPSTVDDDEPQTDIDFYVDRDMINIADTKVARHVGEHFLRHIQKLQEVQDVLKRLDSAGQKP.

A compositionally biased stretch (basic and acidic residues) spans 1-19 (MSRRVEFDMSHEDHTDRRR). The disordered stretch occupies residues 1-28 (MSRRVEFDMSHEDHTDRRRTNTFSSEED). A PCI domain is found at 297 to 485 (EATKMFVNCL…GPSTVDDDEP (189 aa)).

Belongs to the eIF-3 subunit L family. Component of the eukaryotic translation initiation factor 3 (eIF-3) complex.

It is found in the cytoplasm. Functionally, component of the eukaryotic translation initiation factor 3 (eIF-3) complex, which is involved in protein synthesis of a specialized repertoire of mRNAs and, together with other initiation factors, stimulates binding of mRNA and methionyl-tRNAi to the 40S ribosome. The eIF-3 complex specifically targets and initiates translation of a subset of mRNAs involved in cell proliferation. The sequence is that of Eukaryotic translation initiation factor 3 subunit L from Caenorhabditis briggsae.